The chain runs to 180 residues: ATP-dependent Clp protease proteolytic subunit 2 (180 aa).

The active-site Nucleophile is the Ser-86. His-111 is an active-site residue.

The protein belongs to the peptidase S14 family. As to quaternary structure, fourteen ClpP subunits assemble into 2 heptameric rings which stack back to back to give a disk-like structure with a central cavity, resembling the structure of eukaryotic proteasomes.

It localises to the cytoplasm. The catalysed reaction is Hydrolysis of proteins to small peptides in the presence of ATP and magnesium. alpha-casein is the usual test substrate. In the absence of ATP, only oligopeptides shorter than five residues are hydrolyzed (such as succinyl-Leu-Tyr-|-NHMec, and Leu-Tyr-Leu-|-Tyr-Trp, in which cleavage of the -Tyr-|-Leu- and -Tyr-|-Trp bonds also occurs).. In terms of biological role, cleaves peptides in various proteins in a process that requires ATP hydrolysis. Has a chymotrypsin-like activity. Plays a major role in the degradation of misfolded proteins. This is ATP-dependent Clp protease proteolytic subunit 2 from Tropheryma whipplei (strain Twist) (Whipple's bacillus).